Here is a 168-residue protein sequence, read N- to C-terminus: ATP synthase F(1) complex subunit delta, mitochondrial (168 aa).

Residues M1–Y22 constitute a mitochondrion transit peptide. N6-acetyllysine; alternate occurs at positions 136 and 165. An N6-succinyllysine; alternate mark is found at K136 and K165.

Belongs to the ATPase epsilon chain family. As to quaternary structure, component of the ATP synthase complex composed at least of ATP5F1A/subunit alpha, ATP5F1B/subunit beta, ATP5MC1/subunit c (homooctomer), MT-ATP6/subunit a, MT-ATP8/subunit 8, ATP5ME/subunit e, ATP5MF/subunit f, ATP5MG/subunit g, ATP5MK/subunit k, ATP5MJ/subunit j, ATP5F1C/subunit gamma, ATP5F1D/subunit delta, ATP5F1E/subunit epsilon, ATP5PF/subunit F6, ATP5PB/subunit b, ATP5PD/subunit d, ATP5PO/subunit OSCP. ATP synthase complex consists of a soluble F(1) head domain (subunits alpha(3) and beta(3)) - the catalytic core - and a membrane F(0) domain - the membrane proton channel (subunits c, a, 8, e, f, g, k and j). These two domains are linked by a central stalk (subunits gamma, delta, and epsilon) rotating inside the F1 region and a stationary peripheral stalk (subunits F6, b, d, and OSCP). Component of a complex composed at least by ATPIF1, ATP5F1A, ATP5F1B, ATP5F1C AND ATP5F1E.

Its subcellular location is the mitochondrion. The protein localises to the mitochondrion inner membrane. Functionally, subunit delta, of the mitochondrial membrane ATP synthase complex (F(1)F(0) ATP synthase or Complex V) that produces ATP from ADP in the presence of a proton gradient across the membrane which is generated by electron transport complexes of the respiratory chain. ATP synthase complex consist of a soluble F(1) head domain - the catalytic core - and a membrane F(1) domain - the membrane proton channel. These two domains are linked by a central stalk rotating inside the F(1) region and a stationary peripheral stalk. During catalysis, ATP synthesis in the catalytic domain of F(1) is coupled via a rotary mechanism of the central stalk subunits to proton translocation. In vivo, can only synthesize ATP although its ATP hydrolase activity can be activated artificially in vitro. With the central stalk subunit gamma, is essential for the biogenesis of F(1) catalytic part of the ATP synthase complex namely in the formation of F1 assembly intermediate. The sequence is that of ATP synthase F(1) complex subunit delta, mitochondrial from Bos taurus (Bovine).